We begin with the raw amino-acid sequence, 224 residues long: Glycerol-3-phosphate acyltransferase (224 aa).

Transmembrane regions (helical) follow at residues 14–34, 70–90, 99–119, 129–149, 162–182, and 185–205; these read INMI…GWLL, YLSI…VLGA, TQWS…YLGF, IGSV…IWGI, LIGV…LPLP, and ISII…LFIF.

This sequence belongs to the PlsY family. As to quaternary structure, probably interacts with PlsX.

It is found in the cell inner membrane. It catalyses the reaction an acyl phosphate + sn-glycerol 3-phosphate = a 1-acyl-sn-glycero-3-phosphate + phosphate. Its pathway is lipid metabolism; phospholipid metabolism. Its function is as follows. Catalyzes the transfer of an acyl group from acyl-phosphate (acyl-PO(4)) to glycerol-3-phosphate (G3P) to form lysophosphatidic acid (LPA). This enzyme utilizes acyl-phosphate as fatty acyl donor, but not acyl-CoA or acyl-ACP. In Helicobacter hepaticus (strain ATCC 51449 / 3B1), this protein is Glycerol-3-phosphate acyltransferase.